The primary structure comprises 497 residues: L-arabinose isomerase (497 aa).

Residues E306, E333, H349, and H448 each coordinate Mn(2+).

The protein belongs to the arabinose isomerase family. Mn(2+) serves as cofactor.

It catalyses the reaction beta-L-arabinopyranose = L-ribulose. It functions in the pathway carbohydrate degradation; L-arabinose degradation via L-ribulose; D-xylulose 5-phosphate from L-arabinose (bacterial route): step 1/3. Catalyzes the conversion of L-arabinose to L-ribulose. This Vibrio parahaemolyticus serotype O3:K6 (strain RIMD 2210633) protein is L-arabinose isomerase.